The primary structure comprises 335 residues: MPKSSNLKMQRKGSLRENGLVKGLNKNKFSISKLKELSHADDSRKSHRIIRSGKSSGEAYKQAGKGLMNLGNHLSDWGAKSSNLSLNDISDKIGVLVSELGETEIEFVKAFNENRIKFKAIRAMEDSIAPSRAHRQRLISSIEREEERDPLSPKLTDLQNQLVRTEAENLVGEMQLDNTSREVFKSSFQGLMDAFQLRAQKQMTLSYYASQLAELINDEVAYPGDNPAAYSQKYATQIMHQCVESMARLLAPVTSETTEHVGSDCEFTRKSSSSVEFSDHSQDSGDPSQQNILQVKNVQAVLSIPEAESYKAQLLSSIAEEQKKKELQAKSTVFL.

It is found in the cytoplasm. The protein localises to the cytoskeleton. Its subcellular location is the microtubule organizing center. It localises to the spindle pole body. The protein resides in the nucleus membrane. It is found in the prospore membrane. Functionally, has a role in nuclear division during meiosis II where it stabilizes the proper segregation of the spindle pole bodies. Also has a role in the formation and extension of the forespore membrane. This Schizosaccharomyces pombe (strain 972 / ATCC 24843) (Fission yeast) protein is Meiotic expression up-regulated protein 14 (meu14).